A 335-amino-acid chain; its full sequence is Beta-ketoacyl-[acyl-carrier-protein] synthase III (335 aa).

Active-site residues include Cys118 and His259. Residues Gln260–Arg264 are ACP-binding. Asn289 is a catalytic residue.

Belongs to the thiolase-like superfamily. FabH family. In terms of assembly, homodimer.

It is found in the cytoplasm. The enzyme catalyses malonyl-[ACP] + acetyl-CoA + H(+) = 3-oxobutanoyl-[ACP] + CO2 + CoA. Its pathway is lipid metabolism; fatty acid biosynthesis. Functionally, catalyzes the condensation reaction of fatty acid synthesis by the addition to an acyl acceptor of two carbons from malonyl-ACP. Catalyzes the first condensation reaction which initiates fatty acid synthesis and may therefore play a role in governing the total rate of fatty acid production. Possesses both acetoacetyl-ACP synthase and acetyl transacylase activities. Its substrate specificity determines the biosynthesis of branched-chain and/or straight-chain of fatty acids. In Chlamydia caviae (strain ATCC VR-813 / DSM 19441 / 03DC25 / GPIC) (Chlamydophila caviae), this protein is Beta-ketoacyl-[acyl-carrier-protein] synthase III.